Here is a 251-residue protein sequence, read N- to C-terminus: Histocompatibility antigen 60b (251 aa).

An N-terminal signal peptide occupies residues 1-24; the sequence is MAKSSLSLNWSLLVLLNFLGATLS. Topologically, residues 25-212 are extracellular; sequence TGTDSLSCEL…NSDTQGLSFT (188 aa). N63, N93, N126, and N189 each carry an N-linked (GlcNAc...) asparagine glycan. Residues 213–233 traverse the membrane as a helical segment; that stretch reads WIVIICIGGIVSFMAFMVFAW. Residues 234 to 251 are Cytoplasmic-facing; the sequence is CMLKKKKGALCCSSSSTT.

Belongs to the NKG2D ligand family. In terms of tissue distribution, in strain C57BL/6J, strongly expressed in cardiac muscle and skeletal muscle, with lower expression levels in spleen, liver, kidney and thymus. In strain BALB/cJ, weakly expressed in cardiac muscle, spleen, kidney and thymus.

It localises to the cell membrane. Functionally, ligand for the KLRK1 immunosurveillance receptor. Binding to KLRK1 stimulates cell lysis in vitro. The protein is Histocompatibility antigen 60b of Mus musculus (Mouse).